The sequence spans 205 residues: Quinone-oxidoreductase QR2 (205 aa).

Residues 5–192 form the Flavodoxin-like domain; the sequence is VYIVYYSTYG…LKQAFHQGMY (188 aa). Residues 11-15, 112-165, and His136 contribute to the FMN site; these read STYGH and IFFS…SPYG. Tyr13 is a binding site for NAD(+).

The protein belongs to the WrbA family. FMN is required as a cofactor.

The catalysed reaction is a quinone + NADH + H(+) = a quinol + NAD(+). The enzyme catalyses a quinone + NADPH + H(+) = a quinol + NADP(+). With respect to regulation, inhibited by dicumarol. Its function is as follows. NAD(P)H:quinone oxidoreductase reducing quinones by a two-electron transfer mechanism. Can use either NADPH or NADH as electron donor. Can use menadione, 5-hydroxy-1,4-naphthoquinone (juglone) and 2,6-dimethoxy-p-benzoquinone (DMBQ) as substrates. Mitigates the toxicity of exogenous quinones in the rhizosphere. This Triphysaria versicolor (Yellow owl's clover) protein is Quinone-oxidoreductase QR2.